Reading from the N-terminus, the 560-residue chain is DNA ligase B (560 aa).

The active-site N6-AMP-lysine intermediate is Lys124.

This sequence belongs to the NAD-dependent DNA ligase family. LigB subfamily.

It carries out the reaction NAD(+) + (deoxyribonucleotide)n-3'-hydroxyl + 5'-phospho-(deoxyribonucleotide)m = (deoxyribonucleotide)n+m + AMP + beta-nicotinamide D-nucleotide.. Its function is as follows. Catalyzes the formation of phosphodiester linkages between 5'-phosphoryl and 3'-hydroxyl groups in double-stranded DNA using NAD as a coenzyme and as the energy source for the reaction. The chain is DNA ligase B from Escherichia coli O81 (strain ED1a).